The sequence spans 2051 residues: Autophagy-related protein 2 (2051 aa).

Residues 31 to 121 (QALDLDNLNF…QDEQTAKNKK (91 aa)) form the Chorein N-terminal domain. The span at 108 to 117 (SKQEQDEQTA) shows a compositional bias: basic and acidic residues. Disordered regions lie at residues 108–129 (SKQE…DGDE), 152–179 (RRLE…DDDG), 297–331 (SLVK…DMSI), 363–384 (DTQY…TPRA), 419–466 (RSEP…ADTE), and 501–564 (PGGW…DTST). Composition is skewed to polar residues over residues 374 to 383 (AGSSPLSTPR) and 426 to 435 (PPTSFQPQTM). The span at 436-454 (PSGAVSPAPSEPSSSASSV) shows a compositional bias: low complexity.

This sequence belongs to the ATG2 family.

The protein localises to the preautophagosomal structure membrane. It localises to the endoplasmic reticulum membrane. The enzyme catalyses a 1,2-diacyl-sn-glycero-3-phosphocholine(in) = a 1,2-diacyl-sn-glycero-3-phosphocholine(out). The catalysed reaction is a 1,2-diacyl-sn-glycero-3-phospho-L-serine(in) = a 1,2-diacyl-sn-glycero-3-phospho-L-serine(out). It carries out the reaction a 1,2-diacyl-sn-glycero-3-phosphoethanolamine(in) = a 1,2-diacyl-sn-glycero-3-phosphoethanolamine(out). Lipid transfer protein required for autophagosome completion and peroxisome degradation. Tethers the edge of the isolation membrane (IM) to the endoplasmic reticulum (ER) and mediates direct lipid transfer from ER to IM for IM expansion. Atg-2 binds to the ER exit site (ERES), which is the membrane source for autophagosome formation, using basic residues in its N-terminal region (NR) and to the expanding edge of the IM through its C-terminal region. The latter binding is assisted by an atg-18-PtdIns3P interaction. Atg-2 then extracts phospholipids from the membrane source using its NR and transfers them to atg-9 to the IM through its predicted beta-sheet-rich structure for membrane expansion. This Neurospora crassa (strain ATCC 24698 / 74-OR23-1A / CBS 708.71 / DSM 1257 / FGSC 987) protein is Autophagy-related protein 2 (apg-2).